The primary structure comprises 226 residues: N-(5'-phosphoribosyl)anthranilate isomerase (226 aa).

This sequence belongs to the TrpF family.

The enzyme catalyses N-(5-phospho-beta-D-ribosyl)anthranilate = 1-(2-carboxyphenylamino)-1-deoxy-D-ribulose 5-phosphate. Its pathway is amino-acid biosynthesis; L-tryptophan biosynthesis; L-tryptophan from chorismate: step 3/5. This is N-(5'-phosphoribosyl)anthranilate isomerase (TRP1) from Candida albicans (strain SC5314 / ATCC MYA-2876) (Yeast).